A 213-amino-acid chain; its full sequence is Small ribosomal subunit protein uS7 (213 aa).

The protein belongs to the universal ribosomal protein uS7 family. In terms of assembly, component of the small ribosomal subunit (SSU). Mature N.crassa ribosomes consist of a small (40S) and a large (60S) subunit. The 40S small subunit contains 1 molecule of ribosomal RNA (18S rRNA) and at least 32 different proteins. The large 60S subunit contains 3 rRNA molecules (26S, 5.8S and 5S rRNA) and at least 42 different proteins.

Its subcellular location is the cytoplasm. Its function is as follows. Component of the ribosome, a large ribonucleoprotein complex responsible for the synthesis of proteins in the cell. The small ribosomal subunit (SSU) binds messenger RNAs (mRNAs) and translates the encoded message by selecting cognate aminoacyl-transfer RNA (tRNA) molecules. The large subunit (LSU) contains the ribosomal catalytic site termed the peptidyl transferase center (PTC), which catalyzes the formation of peptide bonds, thereby polymerizing the amino acids delivered by tRNAs into a polypeptide chain. The nascent polypeptides leave the ribosome through a tunnel in the LSU and interact with protein factors that function in enzymatic processing, targeting, and the membrane insertion of nascent chains at the exit of the ribosomal tunnel. This chain is Small ribosomal subunit protein uS7 (rps-5), found in Neurospora crassa (strain ATCC 24698 / 74-OR23-1A / CBS 708.71 / DSM 1257 / FGSC 987).